A 645-amino-acid chain; its full sequence is 1,4-alpha-glucan branching enzyme GlgB (645 aa).

Catalysis depends on Asp-309, which acts as the Nucleophile. The active-site Proton donor is the Glu-352. The disordered stretch occupies residues 619–645 (VKTRKGSKKQDGSKTKVRSNVTSRGKR). A compositionally biased stretch (polar residues) spans 636 to 645 (RSNVTSRGKR).

This sequence belongs to the glycosyl hydrolase 13 family. GlgB subfamily. Monomer.

The enzyme catalyses Transfers a segment of a (1-&gt;4)-alpha-D-glucan chain to a primary hydroxy group in a similar glucan chain.. It functions in the pathway glycan biosynthesis; glycogen biosynthesis. Functionally, catalyzes the formation of the alpha-1,6-glucosidic linkages in glycogen by scission of a 1,4-alpha-linked oligosaccharide from growing alpha-1,4-glucan chains and the subsequent attachment of the oligosaccharide to the alpha-1,6 position. This Bacillus cereus (strain AH820) protein is 1,4-alpha-glucan branching enzyme GlgB.